Reading from the N-terminus, the 417-residue chain is Multifunctional CCA protein (417 aa).

2 residues coordinate ATP: glycine 8 and arginine 11. 2 residues coordinate CTP: glycine 8 and arginine 11. Residues aspartate 21 and aspartate 23 each coordinate Mg(2+). ATP-binding residues include arginine 91, arginine 143, and arginine 146. Arginine 91, arginine 143, and arginine 146 together coordinate CTP. Residues 232–333 enclose the HD domain; that stretch reads TGVHVMMVVD…VRLFERSDAL (102 aa).

This sequence belongs to the tRNA nucleotidyltransferase/poly(A) polymerase family. Bacterial CCA-adding enzyme type 1 subfamily. As to quaternary structure, monomer. Can also form homodimers and oligomers. Mg(2+) serves as cofactor. Ni(2+) is required as a cofactor.

The catalysed reaction is a tRNA precursor + 2 CTP + ATP = a tRNA with a 3' CCA end + 3 diphosphate. It carries out the reaction a tRNA with a 3' CCA end + 2 CTP + ATP = a tRNA with a 3' CCACCA end + 3 diphosphate. Functionally, catalyzes the addition and repair of the essential 3'-terminal CCA sequence in tRNAs without using a nucleic acid template. Adds these three nucleotides in the order of C, C, and A to the tRNA nucleotide-73, using CTP and ATP as substrates and producing inorganic pyrophosphate. tRNA 3'-terminal CCA addition is required both for tRNA processing and repair. Also involved in tRNA surveillance by mediating tandem CCA addition to generate a CCACCA at the 3' terminus of unstable tRNAs. While stable tRNAs receive only 3'-terminal CCA, unstable tRNAs are marked with CCACCA and rapidly degraded. The polypeptide is Multifunctional CCA protein (Paraburkholderia phymatum (strain DSM 17167 / CIP 108236 / LMG 21445 / STM815) (Burkholderia phymatum)).